Here is a 318-residue protein sequence, read N- to C-terminus: uncharacterized protein (318 aa).

Belongs to the NAD(P)-dependent epimerase/dehydratase family.

This is an uncharacterized protein from Staphylococcus epidermidis (strain ATCC 12228 / FDA PCI 1200).